Here is a 363-residue protein sequence, read N- to C-terminus: Putative lipoate-protein ligase A (363 aa).

Positions 49 to 229 (STAKHCLLLY…CFLLHKSHST (181 aa)) constitute a BPL/LPL catalytic domain. ATP contacts are provided by residues Arg91, 96–99 (GTVF), and Lys152. A (R)-lipoate-binding site is contributed by Lys152.

It belongs to the LplA family. Monomer.

It localises to the cytoplasm. It carries out the reaction L-lysyl-[lipoyl-carrier protein] + (R)-lipoate + ATP = N(6)-[(R)-lipoyl]-L-lysyl-[lipoyl-carrier protein] + AMP + diphosphate + H(+). Its pathway is protein modification; protein lipoylation via exogenous pathway; protein N(6)-(lipoyl)lysine from lipoate: step 1/2. The protein operates within protein modification; protein lipoylation via exogenous pathway; protein N(6)-(lipoyl)lysine from lipoate: step 2/2. In terms of biological role, catalyzes both the ATP-dependent activation of exogenously supplied lipoate to lipoyl-AMP and the transfer of the activated lipoyl onto the lipoyl domains of lipoate-dependent enzymes. The chain is Putative lipoate-protein ligase A (aim22) from Schizosaccharomyces pombe (strain 972 / ATCC 24843) (Fission yeast).